Reading from the N-terminus, the 366-residue chain is S-adenosylmethionine:tRNA ribosyltransferase-isomerase (366 aa).

The protein belongs to the QueA family. In terms of assembly, monomer.

Its subcellular location is the cytoplasm. It carries out the reaction 7-aminomethyl-7-carbaguanosine(34) in tRNA + S-adenosyl-L-methionine = epoxyqueuosine(34) in tRNA + adenine + L-methionine + 2 H(+). Its pathway is tRNA modification; tRNA-queuosine biosynthesis. Transfers and isomerizes the ribose moiety from AdoMet to the 7-aminomethyl group of 7-deazaguanine (preQ1-tRNA) to give epoxyqueuosine (oQ-tRNA). In Methylorubrum populi (strain ATCC BAA-705 / NCIMB 13946 / BJ001) (Methylobacterium populi), this protein is S-adenosylmethionine:tRNA ribosyltransferase-isomerase.